Here is a 221-residue protein sequence, read N- to C-terminus: Protein Pisl_1005 (221 aa).

The region spanning 8-201 is the AMMECR1 domain; it reads EEGAYLVKLA…EKTPGGEIYE (194 aa).

The sequence is that of Protein Pisl_1005 from Pyrobaculum islandicum (strain DSM 4184 / JCM 9189 / GEO3).